Here is an 88-residue protein sequence, read N- to C-terminus: Sigma-conotoxin GVIIIA (88 aa).

An N-terminal signal peptide occupies residues 1–20 (MMSKMGAMFVLLLLFTLASS). The propeptide occupies 21–46 (LQEGDVQARKTRLKSDFYRALARDDR). Pro55 is subject to 4-hydroxyproline. Trp80 bears the 6'-bromotryptophan mark. Serine amide is present on Ser87.

It belongs to the conotoxin S superfamily. Contains 5 disulfide bonds. As to expression, expressed by the venom duct.

It is found in the secreted. In terms of biological role, sigma-conotoxins bind and inhibit serotonin-gated ion channels. This peptide selectively and reversibly inhibits 5-hydroxytryptamine 3 receptor (HTR3A) through competitive antagonism (IC(50)=53-86.8 nM). This Conus geographus (Geography cone) protein is Sigma-conotoxin GVIIIA.